A 126-amino-acid chain; its full sequence is Protein C10 (126 aa).

Residue Ala-2 is modified to N-acetylalanine.

It belongs to the UPF0456 family. As to expression, ubiquitously expressed, with higher expression in lung and fetal brain.

It is found in the cytoplasm. In terms of biological role, in brain, may be required for corpus callosum development. In Homo sapiens (Human), this protein is Protein C10 (C12orf57).